The primary structure comprises 278 residues: 4-hydroxy-tetrahydrodipicolinate reductase (278 aa).

NAD(+) contacts are provided by residues 16–21 (GAGGRM) and Glu-42. Position 43 (Arg-43) interacts with NADP(+). Residues 106-108 (GTT) and 130-133 (AGNY) contribute to the NAD(+) site. His-163 functions as the Proton donor/acceptor in the catalytic mechanism. His-164 is a (S)-2,3,4,5-tetrahydrodipicolinate binding site. The active-site Proton donor is Lys-167. 173-174 (GT) is a (S)-2,3,4,5-tetrahydrodipicolinate binding site.

This sequence belongs to the DapB family.

The protein localises to the cytoplasm. It carries out the reaction (S)-2,3,4,5-tetrahydrodipicolinate + NAD(+) + H2O = (2S,4S)-4-hydroxy-2,3,4,5-tetrahydrodipicolinate + NADH + H(+). The enzyme catalyses (S)-2,3,4,5-tetrahydrodipicolinate + NADP(+) + H2O = (2S,4S)-4-hydroxy-2,3,4,5-tetrahydrodipicolinate + NADPH + H(+). It participates in amino-acid biosynthesis; L-lysine biosynthesis via DAP pathway; (S)-tetrahydrodipicolinate from L-aspartate: step 4/4. Catalyzes the conversion of 4-hydroxy-tetrahydrodipicolinate (HTPA) to tetrahydrodipicolinate. This Psychrobacter arcticus (strain DSM 17307 / VKM B-2377 / 273-4) protein is 4-hydroxy-tetrahydrodipicolinate reductase.